A 293-amino-acid polypeptide reads, in one-letter code: Transcriptional regulator ICP22 homolog (293 aa).

Disordered stretches follow at residues 1–49 and 175–293; these read MPHG…QRID and RFLE…SARR. Positions 21-31 are enriched in low complexity; that stretch reads TPSTSPLIPSL. The span at 190–210 shows a compositional bias: acidic residues; the sequence is EECDVSGDESPSEEEEEDEAS. The segment covering 272–281 has biased composition (basic residues); that stretch reads AAKKRRKRQP. Residues 282–293 show a composition bias toward basic and acidic residues; it reads PKGERPTKSARR.

Belongs to the herpesviridae ICP22 family.

This is Transcriptional regulator ICP22 homolog (IR4) from Equus caballus (Horse).